Here is a 374-residue protein sequence, read N- to C-terminus: Flavonoid O-methyltransferase-like protein Os11g0303600 (374 aa).

4 residues coordinate S-adenosyl-L-homocysteine: aspartate 242, aspartate 262, methionine 263, and lysine 276. Histidine 280 serves as the catalytic Proton acceptor.

It belongs to the class I-like SAM-binding methyltransferase superfamily. Cation-independent O-methyltransferase family. COMT subfamily.

The polypeptide is Flavonoid O-methyltransferase-like protein Os11g0303600 (Oryza sativa subsp. japonica (Rice)).